The sequence spans 314 residues: Putative S-adenosyl-L-methionine-dependent methyltransferase MMAR_5323 (314 aa).

S-adenosyl-L-methionine contacts are provided by residues Asp132 and 161-162 (DL).

It belongs to the UPF0677 family.

In terms of biological role, exhibits S-adenosyl-L-methionine-dependent methyltransferase activity. In Mycobacterium marinum (strain ATCC BAA-535 / M), this protein is Putative S-adenosyl-L-methionine-dependent methyltransferase MMAR_5323.